The following is a 365-amino-acid chain: Phosphate acyltransferase (365 aa).

This sequence belongs to the PlsX family. Homodimer. Probably interacts with PlsY.

Its subcellular location is the cytoplasm. The enzyme catalyses a fatty acyl-[ACP] + phosphate = an acyl phosphate + holo-[ACP]. The protein operates within lipid metabolism; phospholipid metabolism. Its function is as follows. Catalyzes the reversible formation of acyl-phosphate (acyl-PO(4)) from acyl-[acyl-carrier-protein] (acyl-ACP). This enzyme utilizes acyl-ACP as fatty acyl donor, but not acyl-CoA. In Jannaschia sp. (strain CCS1), this protein is Phosphate acyltransferase.